The following is a 117-amino-acid chain: Large ribosomal subunit protein bL20 (117 aa).

It belongs to the bacterial ribosomal protein bL20 family.

In terms of biological role, binds directly to 23S ribosomal RNA and is necessary for the in vitro assembly process of the 50S ribosomal subunit. It is not involved in the protein synthesizing functions of that subunit. This is Large ribosomal subunit protein bL20 from Pasteurella multocida (strain Pm70).